The chain runs to 470 residues: Sugar transporter ERD6-like 8 (470 aa).

Basic and acidic residues predominate over residues 1-16; sequence METRKDDMEKRNDKSE. Residues 1–24 form a disordered region; the sequence is METRKDDMEKRNDKSEPLLLPENG. Helical transmembrane passes span 33 to 53, 73 to 93, 110 to 130, 133 to 153, 164 to 184, 188 to 208, 270 to 290, 307 to 327, 335 to 355, 373 to 393, 409 to 429, and 434 to 454; these read WMVY…GTCV, QFSV…ITSG, VISA…PLDF, FLTG…IAEI, TLNQ…GAVV, TLAL…WFIP, FVIV…NGVI, GSIL…TLLI, LLMA…NSFL, GVLV…WVIM, VTVV…FLMI, and GTFY…AKLV.

The protein belongs to the major facilitator superfamily. Sugar transporter (TC 2.A.1.1) family.

It is found in the membrane. Sugar transporter. In Arabidopsis thaliana (Mouse-ear cress), this protein is Sugar transporter ERD6-like 8.